A 167-amino-acid polypeptide reads, in one-letter code: Mannose-specific lectin (167 aa).

The N-terminal stretch at 1–24 is a signal peptide; that stretch reads MAFSISSTMIFLLSLALFSTLVSA. The 114-residue stretch at 25–138 folds into the Bulb-type lectin domain; that stretch reads DNHLLPGERL…PIFATGTNRF (114 aa). C53 and C76 are disulfide-bonded.

Homotetramer. In terms of tissue distribution, expressed in the pseudobulb, with highest levels of expression in the non-swollen internode (at protein level).

It localises to the secreted. Functionally, mannose-specific lectin. Shows agglutinating activity towards chicken erythrocytes. Has antifungal activity against A.alternata and Collectotrichum species. The sequence is that of Mannose-specific lectin from Dendrobium findlayanum (Findlay's orchid).